The primary structure comprises 155 residues: 3-hydroxyacyl-[acyl-carrier-protein] dehydratase FabZ (155 aa).

The active site involves H57.

This sequence belongs to the thioester dehydratase family. FabZ subfamily.

It localises to the cytoplasm. It carries out the reaction a (3R)-hydroxyacyl-[ACP] = a (2E)-enoyl-[ACP] + H2O. Functionally, involved in unsaturated fatty acids biosynthesis. Catalyzes the dehydration of short chain beta-hydroxyacyl-ACPs and long chain saturated and unsaturated beta-hydroxyacyl-ACPs. The protein is 3-hydroxyacyl-[acyl-carrier-protein] dehydratase FabZ of Cereibacter sphaeroides (strain KD131 / KCTC 12085) (Rhodobacter sphaeroides).